The sequence spans 229 residues: Heptaprenylglyceryl phosphate synthase (229 aa).

Lys-12 provides a ligand contact to sn-glycerol 1-phosphate. Residues Asp-14 and Thr-40 each contribute to the Mg(2+) site. Residues 159–164, Gly-189, and 209–210 contribute to the sn-glycerol 1-phosphate site; these read YIEYSG and GN.

This sequence belongs to the GGGP/HepGP synthase family. Group I subfamily. Homodimer. The cofactor is Mg(2+).

It carries out the reaction sn-glycerol 1-phosphate + all-trans-heptaprenyl diphosphate = 3-heptaprenyl-sn-glycero-1-phosphate + diphosphate. Its pathway is membrane lipid metabolism; glycerophospholipid metabolism. In terms of biological role, prenyltransferase that catalyzes in vivo the transfer of the heptaprenyl moiety of heptaprenyl pyrophosphate (HepPP; 35 carbon atoms) to the C3 hydroxyl of sn-glycerol-1-phosphate (G1P), producing heptaprenylglyceryl phosphate (HepGP). This reaction is an ether-bond-formation step in the biosynthesis of archaea-type G1P-based membrane lipids found in Bacillales. The polypeptide is Heptaprenylglyceryl phosphate synthase (Oceanobacillus iheyensis (strain DSM 14371 / CIP 107618 / JCM 11309 / KCTC 3954 / HTE831)).